Reading from the N-terminus, the 83-residue chain is Small ribosomal subunit protein eS21 (83 aa).

Residue Met1 is modified to N-acetylmethionine. Lys81 carries the N6-acetyllysine modification.

This sequence belongs to the eukaryotic ribosomal protein eS21 family. In terms of assembly, component of the 40S small ribosomal subunit.

The protein resides in the cytoplasm. Its subcellular location is the cytosol. The protein localises to the rough endoplasmic reticulum. In terms of biological role, component of the small ribosomal subunit. The ribosome is a large ribonucleoprotein complex responsible for the synthesis of proteins in the cell. The chain is Small ribosomal subunit protein eS21 (Rps21) from Mus musculus (Mouse).